Here is a 127-residue protein sequence, read N- to C-terminus: MSGRGKGGKAKTGGKAKSRSSRAGLQFPVGRLHRILRKGNYAQRVGAGAPVYLAAVLEYLAAEVLELAGNAARDNKKTRIAPRHLQLAVRNDEELNKLLAGVTIAQGGVLPNIQAVLLPKKTGGDKE.

The segment covering 1 to 20 has biased composition (basic residues); it reads MSGRGKGGKAKTGGKAKSRS. The tract at residues 1 to 23 is disordered; that stretch reads MSGRGKGGKAKTGGKAKSRSSRA. The residue at position 2 (serine 2) is an N-acetylserine. Residue serine 2 is modified to Phosphoserine. An N6-acetyllysine; partial mark is found at lysine 6, lysine 9, and lysine 11. N5-methylglutamine is present on glutamine 106. Residue lysine 121 forms a Glycyl lysine isopeptide (Lys-Gly) (interchain with G-Cter in ubiquitin) linkage.

It belongs to the histone H2A family. The nucleosome is a histone octamer containing two molecules each of H2A, H2B, H3 and H4 assembled in one H3-H4 heterotetramer and two H2A-H2B heterodimers. The octamer wraps approximately 147 bp of DNA. Monoubiquitination of Lys-121 gives a specific tag for epigenetic transcriptional repression. Post-translationally, phosphorylation on Ser-2 is enhanced during mitosis. Phosphorylation on Ser-2 directly represses transcription.

The protein resides in the nucleus. The protein localises to the chromosome. Functionally, core component of nucleosome. Nucleosomes wrap and compact DNA into chromatin, limiting DNA accessibility to the cellular machineries which require DNA as a template. Histones thereby play a central role in transcription regulation, DNA repair, DNA replication and chromosomal stability. DNA accessibility is regulated via a complex set of post-translational modifications of histones, also called histone code, and nucleosome remodeling. The protein is Histone H2A (his-3) of Caenorhabditis elegans.